A 216-amino-acid chain; its full sequence is Glycerol-3-phosphate acyltransferase (216 aa).

5 helical membrane-spanning segments follow: residues 11-31, 62-82, 95-115, 132-152, and 171-191; these read LVLG…FGLV, LALA…LVAS, VLAG…PIWL, ATAW…AALF, and LVLA…LAWI.

This sequence belongs to the PlsY family. As to quaternary structure, probably interacts with PlsX.

It localises to the cell inner membrane. The enzyme catalyses an acyl phosphate + sn-glycerol 3-phosphate = a 1-acyl-sn-glycero-3-phosphate + phosphate. The protein operates within lipid metabolism; phospholipid metabolism. Functionally, catalyzes the transfer of an acyl group from acyl-phosphate (acyl-PO(4)) to glycerol-3-phosphate (G3P) to form lysophosphatidic acid (LPA). This enzyme utilizes acyl-phosphate as fatty acyl donor, but not acyl-CoA or acyl-ACP. In Rhodospirillum rubrum (strain ATCC 11170 / ATH 1.1.1 / DSM 467 / LMG 4362 / NCIMB 8255 / S1), this protein is Glycerol-3-phosphate acyltransferase.